The primary structure comprises 122 residues: Large ribosomal subunit protein bL12 (122 aa).

Belongs to the bacterial ribosomal protein bL12 family. Homodimer. Part of the ribosomal stalk of the 50S ribosomal subunit. Forms a multimeric L10(L12)X complex, where L10 forms an elongated spine to which 2 to 4 L12 dimers bind in a sequential fashion. Binds GTP-bound translation factors.

In terms of biological role, forms part of the ribosomal stalk which helps the ribosome interact with GTP-bound translation factors. Is thus essential for accurate translation. The sequence is that of Large ribosomal subunit protein bL12 from Buchnera aphidicola subsp. Acyrthosiphon pisum (strain Tuc7).